The primary structure comprises 109 residues: MFGKGGIGNLMKQAQQMQEKMQQMQEEVANLEVTGESGAGLVKITINGAHNCRRVEIDPSLMEDDKEMLEDLIAAAFNDAARRIAETQKEKMATVSSGMQLPPGFKMPF.

This sequence belongs to the YbaB/EbfC family. In terms of assembly, homodimer.

The protein resides in the cytoplasm. The protein localises to the nucleoid. In terms of biological role, binds to DNA and alters its conformation. May be involved in regulation of gene expression, nucleoid organization and DNA protection. This chain is Nucleoid-associated protein ECA1177, found in Pectobacterium atrosepticum (strain SCRI 1043 / ATCC BAA-672) (Erwinia carotovora subsp. atroseptica).